The chain runs to 474 residues: PRAME family member 13 (474 aa).

Residues 97–124 (RRKLQVLDLRDVDENFWARWPGAWALSC) form an LRR 1; degenerate repeat. The stretch at 179–203 (HLCCSKLVNYLTPIKHLRKSLKIIY) is one LRR 2; degenerate repeat. One copy of the LRR 3; degenerate repeat lies at 204–230 (LNSIQELEIHNMSWPRLIRKLRCYLKE). The stretch at 231–265 (MKTLGKLVFSRCHHSTSDNELEGRLVTKFSSVFLG) is one LRR 4; degenerate repeat. LRR repeat units follow at residues 266 to 291 (LEHLQLLKIKLITFFSGHLEQLIRCL), 292 to 323 (QNPLENLELTYGYLLEEDVKCLSQYPSLGYLK), 324 to 342 (HLNLSYVLLFRISLEPLGA), 348 to 375 (AASLETLILEGCQIHYSQLSAILPGLSR), and 376 to 400 (CSQLTTFYFGRNCMSMGALKDLLRH).

It belongs to the PRAME family.

This is PRAME family member 13 from Homo sapiens (Human).